The primary structure comprises 387 residues: MNYQPTPEDRFTFGLWTVGWQGRDPFGDATRQALDPAESVRRLSELGAYGVTFHDDDLIPFGSSDTERESHIKRFRQALDATGMKVPMATTNLFTHPVFKDGAFTANDRDVRRYALRKTIRNIDLAVELGASVYVAWGGREGAESGAAKDVRDALDRMKEAFDLLGEYVTEQGYDLKFAIEPKPNEPRGDILLPTVGHALAFIERLERPELYGVNPEVGHEQMAGLNFPHGIAQALWAGKLFHIDLNGQSGIKYDQDLRFGAGDLRAAFWLVDLLERAGYAGPRHFDFKPPRTEDFDGVWASAAGCMRNYLILKDRAAAFRADPQVQEALAAARLDELARPTAEDGLAALLADRSAYDTFDVDAAAARGMAFEHLDQLAMDHLLGAR.

Catalysis depends on residues H54 and D57. The Mg(2+) site is built by E181, E217, H220, D245, D255, D257, and D287.

Belongs to the xylose isomerase family. As to quaternary structure, homotetramer. Mg(2+) serves as cofactor.

It is found in the cytoplasm. The enzyme catalyses alpha-D-xylose = alpha-D-xylulofuranose. This is Xylose isomerase from Streptomyces coelicolor (strain ATCC BAA-471 / A3(2) / M145).